We begin with the raw amino-acid sequence, 710 residues long: Chloride channel protein CLC-e (710 aa).

12 helical membrane-spanning segments follow: residues 74–94, 122–142, 164–184, 193–213, 222–242, 261–281, 296–316, 340–360, 379–399, 412–432, 451–471, and 472–492; these read ELAI…VVLF, IGSN…VVSI, VKAV…LGTG, SVEI…KSPQ, GSAA…FFAV, TTSM…IGLG, PGEL…SLAL, VFPV…PEVL, GLSA…TAWC, SLFI…LALA, GLVG…TAVL, and LLFE…AVGM. The segment at 500-534 is disordered; it reads QSKRQETRETKETRKRKSQEAVQSLTSSDDESSTN. The span at 502–511 shows a compositional bias: basic and acidic residues; sequence KRQETRETKE. The segment covering 520–534 has biased composition (polar residues); the sequence is AVQSLTSSDDESSTN. CBS domains are found at residues 565–624 and 640–702; these read MRTR…GNNR and KCKV…ATRM. Residues 667–687 traverse the membrane as a helical segment; it reads HVAVVSGSIDAPRIHPVGVLD.

The protein belongs to the chloride channel (TC 2.A.49) family. Homodimer.

It is found in the membrane. It carries out the reaction 2 chloride(in) + H(+)(out) = 2 chloride(out) + H(+)(in). In terms of biological role, voltage-gated thylakoid chloride (Cl) channel/transporter involved in chloride homeostasis after transition from light to dark. Influences chloroplast ultrastructure and subsequent photosynthetic electron transport. During photosynthetic response on transition from dark to low light, involved in a sequential mechanism of adaptation; VCCN1 and CLCe first trigger the activation of photoprotection, which is later down-regulated by KEA3 to a low steady state, while adjusting electron transport. Regulates photosynthesis by a pH-independent mechanism likely involving Cl(-) homeostasis. This chain is Chloride channel protein CLC-e, found in Arabidopsis thaliana (Mouse-ear cress).